The sequence spans 304 residues: Putative AraC-like transcription regulator (304 aa).

Residues 202-300 enclose the HTH araC/xylS-type domain; that stretch reads ATALTCLHRD…GMPPGDYRKH (99 aa). DNA-binding regions (H-T-H motif) lie at residues 219–240 and 267–290; these read ADLADTAAVSRSTLAARFKATV and LASIAHSVGYGSESALSVAFKRVL.

This chain is Putative AraC-like transcription regulator, found in Streptomyces lividans.